A 321-amino-acid polypeptide reads, in one-letter code: Transmembrane and ubiquitin-like domain-containing protein 2 (321 aa).

A helical membrane pass occupies residues 36–56 (VMVVAGVVVLILALVLAWLST). Disordered regions lie at residues 87 to 131 (LVAG…GGVE) and 145 to 170 (KRQAGAGSSSPEAPLRSEDSTCLPPS). Residues 104–120 (EGNDEKAEEAGEGRGDS) are compositionally biased toward basic and acidic residues. The Ubiquitin-like domain occupies 174-247 (ITVRLKFLND…IHCHRSPPGS (74 aa)). 2 consecutive transmembrane segments (helical) span residues 266 to 286 (LGVNVGSLMVPVFVVLLGVVW) and 295 to 315 (FFTAPATVSLVGVTVFFSFLV).

It is found in the membrane. The sequence is that of Transmembrane and ubiquitin-like domain-containing protein 2 (TMUB2) from Homo sapiens (Human).